The sequence spans 700 residues: Lutropin-choriogonadotropic hormone receptor (700 aa).

A signal peptide spans 1–26 (MGRRVPALRQLLVLAMLVLKQSQLHS). At 27 to 362 (PELSGSRCPE…AFNPCEDIMG (336 aa)) the chain is on the extracellular side. One copy of the LRR 1 repeat lies at 52 to 75 (RAGLARLSLTYLPVKVIPSQAFRG). N103 carries an N-linked (GlcNAc...) asparagine glycan. 3 LRR repeats span residues 126–150 (LPRL…KISS), 176–200 (MNNE…AFNG), and 225–248 (ATGP…GLES). Residues N178 and N199 are each glycosylated (N-linked (GlcNAc...) asparagine). N-linked (GlcNAc...) asparagine glycosylation is found at N295, N303, and N317. Residue Y335 is modified to Sulfotyrosine. The chain crosses the membrane as a helical span at residues 363-390 (YAFLRVLIWLINILAIFGNLTVLFVLLT). At 391 to 399 (SRYKLTVPR) the chain is on the cytoplasmic side. The chain crosses the membrane as a helical span at residues 400–422 (FLMCNLSFADFCMGLYLLLIASV). Over 423 to 443 (DSQTKGQYYNHAIDWQTGSGC) the chain is Extracellular. C443 and C518 form a disulfide bridge. A helical transmembrane segment spans residues 444-466 (SAAGFFTVFASELSVYTLTVITL). Residues 467-486 (ERWHTITYAVQLDQKLRLRH) lie on the Cytoplasmic side of the membrane. Residues 487 to 509 (AIPIMLGGWIFSTLMATLPLVGV) traverse the membrane as a helical segment. Over 510 to 529 (SSYMKVSICLPMDVESTLSQ) the chain is Extracellular. The chain crosses the membrane as a helical span at residues 530–551 (VYILSILLLNAVAFVVICACYV). The Cytoplasmic portion of the chain corresponds to 552-574 (RIYFAVQNPELTAPNKDTKIAKK). The helical transmembrane segment at 575 to 598 (MAILIFTDFTCMAPISFFAISAAF) threads the bilayer. At 599–609 (KVPLITVTNSK) the chain is on the extracellular side. Residues 610–631 (VLLVLFYPVNSCANPFLYAVFT) traverse the membrane as a helical segment. Residues 632–700 (KAFQRDFFLL…QPTPPRVLIQ (69 aa)) lie on the Cytoplasmic side of the membrane. Residues C647 and C648 are each lipidated (S-palmitoyl cysteine).

This sequence belongs to the G-protein coupled receptor 1 family. FSH/LSH/TSH subfamily. Sulfated.

It localises to the cell membrane. Receptor for lutropin-choriogonadotropic hormone. The activity of this receptor is mediated by G proteins which activate adenylate cyclase. This is Lutropin-choriogonadotropic hormone receptor (Lhcgr) from Mus musculus (Mouse).